A 108-amino-acid polypeptide reads, in one-letter code: MSGPHPTGLHRLAETIAARKGADPETSWTAKLLAKGPEKCAEKFGEEAVEAIIEAVKGDRAKLISEAADTLYHLLVMLAARDVTLSDVENELDRREGRSGIEEKASRK.

The disordered stretch occupies residues 88–108 (VENELDRREGRSGIEEKASRK). The span at 91-108 (ELDRREGRSGIEEKASRK) shows a compositional bias: basic and acidic residues.

Belongs to the PRA-PH family.

Its subcellular location is the cytoplasm. The enzyme catalyses 1-(5-phospho-beta-D-ribosyl)-ATP + H2O = 1-(5-phospho-beta-D-ribosyl)-5'-AMP + diphosphate + H(+). The protein operates within amino-acid biosynthesis; L-histidine biosynthesis; L-histidine from 5-phospho-alpha-D-ribose 1-diphosphate: step 2/9. The chain is Phosphoribosyl-ATP pyrophosphatase from Paracoccus denitrificans (strain Pd 1222).